The sequence spans 432 residues: 3-phosphoshikimate 1-carboxyvinyltransferase (432 aa).

The 3-phosphoshikimate site is built by lysine 22, serine 23, and arginine 27. Position 22 (lysine 22) interacts with phosphoenolpyruvate. Glycine 96 and arginine 127 together coordinate phosphoenolpyruvate. Positions 173, 174, 175, 201, 316, 339, and 343 each coordinate 3-phosphoshikimate. Position 175 (glutamine 175) interacts with phosphoenolpyruvate. Aspartate 316 serves as the catalytic Proton acceptor. The phosphoenolpyruvate site is built by arginine 347, arginine 391, and lysine 416.

Belongs to the EPSP synthase family. As to quaternary structure, monomer.

It localises to the cytoplasm. The catalysed reaction is 3-phosphoshikimate + phosphoenolpyruvate = 5-O-(1-carboxyvinyl)-3-phosphoshikimate + phosphate. The protein operates within metabolic intermediate biosynthesis; chorismate biosynthesis; chorismate from D-erythrose 4-phosphate and phosphoenolpyruvate: step 6/7. Functionally, catalyzes the transfer of the enolpyruvyl moiety of phosphoenolpyruvate (PEP) to the 5-hydroxyl of shikimate-3-phosphate (S3P) to produce enolpyruvyl shikimate-3-phosphate and inorganic phosphate. The protein is 3-phosphoshikimate 1-carboxyvinyltransferase of Actinobacillus pleuropneumoniae serotype 5b (strain L20).